A 196-amino-acid polypeptide reads, in one-letter code: MYEYFKGIISKITAKYIVLEVNSIGYILHVANPYAYSGQLHQEAKVYVHQVVREDAELLYGFATEEEKQLFLSLISVSGIGPVSALAIIAADDNAGLVQAIEQKNITYLTKFPKIGKKTAQQMVLDLEGKVVAAGSPAESKAPVQTADNQELEEAMEAMLALGYKAAELKKIKKFFEGTTDTAENYIKSALKMLVK.

Residues 1-63 (MYEYFKGIIS…EDAELLYGFA (63 aa)) are domain I. The interval 64–142 (TEEEKQLFLS…AAGSPAESKA (79 aa)) is domain II. Positions 143 to 146 (PVQT) are flexible linker. Residues 147-196 (ADNQELEEAMEAMLALGYKAAELKKIKKFFEGTTDTAENYIKSALKMLVK) are domain III.

The protein belongs to the RuvA family. Homotetramer. Forms an RuvA(8)-RuvB(12)-Holliday junction (HJ) complex. HJ DNA is sandwiched between 2 RuvA tetramers; dsDNA enters through RuvA and exits via RuvB. An RuvB hexamer assembles on each DNA strand where it exits the tetramer. Each RuvB hexamer is contacted by two RuvA subunits (via domain III) on 2 adjacent RuvB subunits; this complex drives branch migration. In the full resolvosome a probable DNA-RuvA(4)-RuvB(12)-RuvC(2) complex forms which resolves the HJ.

It localises to the cytoplasm. Its function is as follows. The RuvA-RuvB-RuvC complex processes Holliday junction (HJ) DNA during genetic recombination and DNA repair, while the RuvA-RuvB complex plays an important role in the rescue of blocked DNA replication forks via replication fork reversal (RFR). RuvA specifically binds to HJ cruciform DNA, conferring on it an open structure. The RuvB hexamer acts as an ATP-dependent pump, pulling dsDNA into and through the RuvAB complex. HJ branch migration allows RuvC to scan DNA until it finds its consensus sequence, where it cleaves and resolves the cruciform DNA. The protein is Holliday junction branch migration complex subunit RuvA of Streptococcus sanguinis (strain SK36).